Here is a 375-residue protein sequence, read N- to C-terminus: MFEDIQLIYMNIKILRFWALLYDKNLRRYVCIGLASFHIFTQIVYMMSTNEGLTGIIRNSYMLVLWINTVLRAYLLLADHDRYLALIQKLTEAYYDLLNLNDSYISEILDQVNKVGKLMARGNLFFGMLTSMGFGLYPLSSSERVLPFGSKIPGLNEYESPYYEMWYIFQMLITPMGCCMYIPYTSLIVGLIMFGIVRCKALQHRLRQVALKHPYGDRDPRELREEIIACIRYQQSIIEYMDHINELTTMMFLFELMAFSALLCALLFMLIIVSGTSQLIIVCMYINMILAQILALYWYANELREQNLAVATAAYETEWFTFDVPLRKNILFMMMRAQRPAAILLGNIRPITLELFQNLLNTTYTFFTVLKRVYG.

Residues 1-28 lie on the Cytoplasmic side of the membrane; the sequence is MFEDIQLIYMNIKILRFWALLYDKNLRR. Residues 29–49 form a helical membrane-spanning segment; it reads YVCIGLASFHIFTQIVYMMST. At 50–60 the chain is on the extracellular side; it reads NEGLTGIIRNS. A helical membrane pass occupies residues 61–77; the sequence is YMLVLWINTVLRAYLLL. Topologically, residues 78–121 are cytoplasmic; the sequence is ADHDRYLALIQKLTEAYYDLLNLNDSYISEILDQVNKVGKLMAR. A helical membrane pass occupies residues 122–142; that stretch reads GNLFFGMLTSMGFGLYPLSSS. The Extracellular segment spans residues 143-176; that stretch reads ERVLPFGSKIPGLNEYESPYYEMWYIFQMLITPM. Residues 177–197 traverse the membrane as a helical segment; that stretch reads GCCMYIPYTSLIVGLIMFGIV. The Cytoplasmic segment spans residues 198 to 251; that stretch reads RCKALQHRLRQVALKHPYGDRDPRELREEIIACIRYQQSIIEYMDHINELTTMM. Residues 252–272 traverse the membrane as a helical segment; sequence FLFELMAFSALLCALLFMLII. The Extracellular segment spans residues 273 to 278; the sequence is VSGTSQ. A helical membrane pass occupies residues 279 to 299; the sequence is LIIVCMYINMILAQILALYWY. Over 300–342 the chain is Cytoplasmic; the sequence is ANELREQNLAVATAAYETEWFTFDVPLRKNILFMMMRAQRPAA. A helical membrane pass occupies residues 343–363; that stretch reads ILLGNIRPITLELFQNLLNTT. The Extracellular portion of the chain corresponds to 364–375; that stretch reads YTFFTVLKRVYG.

This sequence belongs to the insect chemoreceptor superfamily. Heteromeric odorant receptor channel (TC 1.A.69) family. Or30a subfamily. In terms of assembly, interacts with Orco. Complexes exist early in the endomembrane system in olfactory sensory neurons (OSNs), coupling these complexes to the conserved ciliary trafficking pathway. As to expression, expressed in olfactory sensory neurons in the antenna.

It localises to the cell membrane. In terms of biological role, odorant receptor which mediates acceptance or avoidance behavior, depending on its substrates. The odorant receptor repertoire encodes a large collection of odor stimuli that vary widely in identity, intensity, and duration. May form a complex with Orco to form odorant-sensing units, providing sensitive and prolonged odorant signaling and calcium permeability. This Drosophila melanogaster (Fruit fly) protein is Odorant receptor 49b (Or49b).